Consider the following 127-residue polypeptide: MSWQAYVDTSLLGTGKIDRAAIVSRAGDSVWAASAGFNLSPQEIQGLAAGFQDPPSMFGTGIILAGQKYITIRAEGRSIYGKLQKEGIICVATKLCILVSHYPETTLPGEAAKITEALADYLVGVGY.

The protein belongs to the profilin family. As to quaternary structure, occurs in many kinds of cells as a complex with monomeric actin in a 1:1 ratio.

Its subcellular location is the cytoplasm. It localises to the cytoskeleton. Binds to actin and affects the structure of the cytoskeleton. At high concentrations, profilin prevents the polymerization of actin, whereas it enhances it at low concentrations. By binding to PIP2, it inhibits the formation of IP3 and DG. In S.pombe, it is essential for cytokinesis. The chain is Profilin (cdc3) from Schizosaccharomyces pombe (strain 972 / ATCC 24843) (Fission yeast).